The chain runs to 203 residues: Large ribosomal subunit protein uL13 (203 aa).

Alanine 2 is subject to N-acetylalanine. Citrulline is present on arginine 59. The residue at position 77 (serine 77) is a Phosphoserine. Arginine 140 carries the citrulline modification. Lysine 191 carries the N6-acetyllysine modification.

The protein belongs to the universal ribosomal protein uL13 family. In terms of assembly, component of the 60S ribosome. Component of the GAIT complex. Interacts with EIF4G1. In terms of processing, phosphorylation at Ser-77 upon interferon-gamma treatment in macrophages involves a DAPK1-DAPK3 kinase cascade and is causing release from the ribosome, association with the GAIT complex and subsequent involvement in transcript-selective translation inhibition. Post-translationally, citrullinated by PADI4.

The protein resides in the cytoplasm. Associated with ribosomes but is not required for canonical ribosome function and has extra-ribosomal functions. Component of the GAIT (gamma interferon-activated inhibitor of translation) complex which mediates interferon-gamma-induced transcript-selective translation inhibition in inflammation processes. Upon interferon-gamma activation and subsequent phosphorylation dissociates from the ribosome and assembles into the GAIT complex which binds to stem loop-containing GAIT elements in the 3'-UTR of diverse inflammatory mRNAs (such as ceruplasmin) and suppresses their translation. In the GAIT complex interacts with m7G cap-bound eIF4G at or near the eIF3-binding site and blocks the recruitment of the 43S ribosomal complex. Involved in methylation of rRNA. The chain is Large ribosomal subunit protein uL13 (RPL13A) from Canis lupus familiaris (Dog).